The chain runs to 1020 residues: UPF0182 protein jk1603 (1020 aa).

Over residues 1 to 18 (MSTPTPPSSGRPKQPFPS) the composition is skewed to pro residues. The tract at residues 1-23 (MSTPTPPSSGRPKQPFPSSPGSS) is disordered. 7 helical membrane-spanning segments follow: residues 28-48 (ILGILVAIIAIAIFIVPVVVS), 73-93 (LVLFVVFGLIGALISWLAAFL), 125-145 (FLVGIPLFVGVITGMIVQSNW), 175-195 (LPFLQMLVSTFSVLLILAFVI), 227-247 (LAVIAGVWMLLKAVGYWFDRY), 272-292 (QIVLLVISIFVAAMFFVTIVL), and 300-320 (LAVALMVGSSLTVGLAWPAML). Positions 924-998 (QEIDGSVVDP…KVNKTRESGT (75 aa)) are disordered. Composition is skewed to basic and acidic residues over residues 942–961 (KGDKGKDADKDKKSKDEQSS) and 969–998 (KSDDKGTDTAPEQRVRDAMDKVNKTRESGT).

It belongs to the UPF0182 family.

It is found in the cell membrane. The protein is UPF0182 protein jk1603 of Corynebacterium jeikeium (strain K411).